A 317-amino-acid chain; its full sequence is MATH domain and coiled-coil domain-containing protein At3g58240 (317 aa).

An MATH domain is found at 6-131 (DNKFTWVIKN…DGEVEIVAQI (126 aa)). Residues 254–305 (KLDWLEKKLDEVKEIKKKCERVTEMEKELHDLMNKHTNVSKLLEKEKLEIKN) adopt a coiled-coil conformation.

The protein is MATH domain and coiled-coil domain-containing protein At3g58240 of Arabidopsis thaliana (Mouse-ear cress).